A 159-amino-acid polypeptide reads, in one-letter code: Biogenesis of lysosome-related organelles complex 1 subunit 2 (159 aa).

Residues 1-37 are disordered; sequence MDKPTTSAAAAAAQDSNLLPDSPQHGPTLSSASSFEA. The span at 14 to 36 shows a compositional bias: polar residues; that stretch reads QDSNLLPDSPQHGPTLSSASSFE. Residues 69-134 adopt a coiled-coil conformation; it reads EDYKLLEEMN…KLEAAAYKLD (66 aa).

The protein belongs to the BLOC1S2 family. As to quaternary structure, homodimer. Component of the biogenesis of lysosome-related organelles complex-1 (BLOC-1) composed of Blos1, Blos2, Blos3, Blos4, Dysb, Muted, Pldn and Snapin. Interacts with Snapin.

Component of the biogenesis of lysosome-related organelles complex-1 (BLOC-1) involved in pigment granule biogenesis. This is Biogenesis of lysosome-related organelles complex 1 subunit 2 from Drosophila melanogaster (Fruit fly).